A 176-amino-acid polypeptide reads, in one-letter code: Ribosome maturation factor RimM (176 aa).

Positions 100–173 constitute a PRC barrel domain; that stretch reads EGEFHLLDLV…WLRLTPPPGL (74 aa).

This sequence belongs to the RimM family. As to quaternary structure, binds ribosomal protein uS19.

The protein localises to the cytoplasm. An accessory protein needed during the final step in the assembly of 30S ribosomal subunit, possibly for assembly of the head region. Essential for efficient processing of 16S rRNA. May be needed both before and after RbfA during the maturation of 16S rRNA. It has affinity for free ribosomal 30S subunits but not for 70S ribosomes. The sequence is that of Ribosome maturation factor RimM from Prochlorococcus marinus (strain MIT 9303).